Consider the following 401-residue polypeptide: Aspartokinase (401 aa).

The protein belongs to the aspartokinase family.

The catalysed reaction is L-aspartate + ATP = 4-phospho-L-aspartate + ADP. The protein operates within amino-acid biosynthesis; L-lysine biosynthesis via DAP pathway; (S)-tetrahydrodipicolinate from L-aspartate: step 1/4. Its pathway is amino-acid biosynthesis; L-methionine biosynthesis via de novo pathway; L-homoserine from L-aspartate: step 1/3. It functions in the pathway amino-acid biosynthesis; L-threonine biosynthesis; L-threonine from L-aspartate: step 1/5. The polypeptide is Aspartokinase (lysC) (Rickettsia conorii (strain ATCC VR-613 / Malish 7)).